Here is a 315-residue protein sequence, read N- to C-terminus: Acetyl-coenzyme A carboxylase carboxyl transferase subunit alpha (315 aa).

A CoA carboxyltransferase C-terminal domain is found at 39 to 293 (RLQDKSSTLT…RADLIEQLDM (255 aa)).

It belongs to the AccA family. As to quaternary structure, acetyl-CoA carboxylase is a heterohexamer composed of biotin carboxyl carrier protein (AccB), biotin carboxylase (AccC) and two subunits each of ACCase subunit alpha (AccA) and ACCase subunit beta (AccD).

The protein resides in the cytoplasm. The catalysed reaction is N(6)-carboxybiotinyl-L-lysyl-[protein] + acetyl-CoA = N(6)-biotinyl-L-lysyl-[protein] + malonyl-CoA. It functions in the pathway lipid metabolism; malonyl-CoA biosynthesis; malonyl-CoA from acetyl-CoA: step 1/1. Its function is as follows. Component of the acetyl coenzyme A carboxylase (ACC) complex. First, biotin carboxylase catalyzes the carboxylation of biotin on its carrier protein (BCCP) and then the CO(2) group is transferred by the carboxyltransferase to acetyl-CoA to form malonyl-CoA. The chain is Acetyl-coenzyme A carboxylase carboxyl transferase subunit alpha from Pseudomonas entomophila (strain L48).